The chain runs to 160 residues: MPLFNPHDLRNLLQSGQRVLGLDPGSKTIGVALTDVSLMLASPLIGLKRRKLGENAQELAKIVRTQDVGALVVGLPLSLDGSFGPAARAASDWTQALSEKLGIPAGLWDERLSSSAVNRFLIKDADMTRGRRAEVVDKMAAAYMLQGWLDASRPEAPEIF.

Belongs to the YqgF nuclease family.

Its subcellular location is the cytoplasm. Functionally, could be a nuclease involved in processing of the 5'-end of pre-16S rRNA. In Gluconobacter oxydans (strain 621H) (Gluconobacter suboxydans), this protein is Putative pre-16S rRNA nuclease.